Consider the following 532-residue polypeptide: Probable cyclic di-GMP phosphodiesterase PdeD (532 aa).

Helical transmembrane passes span 16–36 (MIVC…VRFI) and 245–265 (LPLA…ATAY). The 250-residue stretch at 266–515 (RMSFSREINL…DFPKWLAGSQ (250 aa)) folds into the EAL domain.

The protein resides in the cell membrane. The catalysed reaction is 3',3'-c-di-GMP + H2O = 5'-phosphoguanylyl(3'-&gt;5')guanosine + H(+). Phosphodiesterase (PDE) that catalyzes the hydrolysis of cyclic-di-GMP (c-di-GMP) to 5'-pGpG. May serve as a negative regulator of cellulose synthesis (as has been suggested for S.typhimurium); overexpression inhibits cell aggregation in strains able to produce adhesive curli fimbriae. Cyclic-di-GMP is a second messenger which controls cell surface-associated traits in bacteria. The chain is Probable cyclic di-GMP phosphodiesterase PdeD from Escherichia coli (strain K12).